Reading from the N-terminus, the 382-residue chain is Dual-specificity RNA methyltransferase RlmN (382 aa).

Glutamate 96 serves as the catalytic Proton acceptor. The 241-residue stretch at 102-342 (QGGRGTLCVS…VRTTRGEDID (241 aa)) folds into the Radical SAM core domain. Cysteine 109 and cysteine 345 are joined by a disulfide. The [4Fe-4S] cluster site is built by cysteine 116, cysteine 120, and cysteine 123. Residues 170 to 171 (GE), serine 202, 224 to 226 (SLH), and asparagine 302 each bind S-adenosyl-L-methionine. The active-site S-methylcysteine intermediate is cysteine 345.

The protein belongs to the radical SAM superfamily. RlmN family. Requires [4Fe-4S] cluster as cofactor.

The protein localises to the cytoplasm. The enzyme catalyses adenosine(2503) in 23S rRNA + 2 reduced [2Fe-2S]-[ferredoxin] + 2 S-adenosyl-L-methionine = 2-methyladenosine(2503) in 23S rRNA + 5'-deoxyadenosine + L-methionine + 2 oxidized [2Fe-2S]-[ferredoxin] + S-adenosyl-L-homocysteine. It carries out the reaction adenosine(37) in tRNA + 2 reduced [2Fe-2S]-[ferredoxin] + 2 S-adenosyl-L-methionine = 2-methyladenosine(37) in tRNA + 5'-deoxyadenosine + L-methionine + 2 oxidized [2Fe-2S]-[ferredoxin] + S-adenosyl-L-homocysteine. In terms of biological role, specifically methylates position 2 of adenine 2503 in 23S rRNA and position 2 of adenine 37 in tRNAs. m2A2503 modification seems to play a crucial role in the proofreading step occurring at the peptidyl transferase center and thus would serve to optimize ribosomal fidelity. In Stutzerimonas stutzeri (strain A1501) (Pseudomonas stutzeri), this protein is Dual-specificity RNA methyltransferase RlmN.